Reading from the N-terminus, the 326-residue chain is 4-hydroxythreonine-4-phosphate dehydrogenase (326 aa).

Positions 132 and 133 each coordinate substrate. A divalent metal cation contacts are provided by His-163, His-208, and His-263. Residues Lys-271, Asn-280, and Arg-289 each contribute to the substrate site.

It belongs to the PdxA family. Homodimer. Requires Zn(2+) as cofactor. Mg(2+) serves as cofactor. Co(2+) is required as a cofactor.

It is found in the cytoplasm. It carries out the reaction 4-(phosphooxy)-L-threonine + NAD(+) = 3-amino-2-oxopropyl phosphate + CO2 + NADH. It participates in cofactor biosynthesis; pyridoxine 5'-phosphate biosynthesis; pyridoxine 5'-phosphate from D-erythrose 4-phosphate: step 4/5. In terms of biological role, catalyzes the NAD(P)-dependent oxidation of 4-(phosphooxy)-L-threonine (HTP) into 2-amino-3-oxo-4-(phosphooxy)butyric acid which spontaneously decarboxylates to form 3-amino-2-oxopropyl phosphate (AHAP). This is 4-hydroxythreonine-4-phosphate dehydrogenase from Roseobacter denitrificans (strain ATCC 33942 / OCh 114) (Erythrobacter sp. (strain OCh 114)).